The primary structure comprises 709 residues: MQHIKLEFENLSEQYSFNYVAQAANGGILYQNGGSVLLASVCTQENEKYDDEFLPLSVQYIEKTYANNKFPSGFIKREGKPSEFEILTSRLIDRTLRPLFPKGYTYITSIVVMVLSYDGKSDLQLNALNAAACALYVSDLPLESLQDKAVSGVRIGRKDGHFIINPTMEQLSESELNLFVSGRDDELLMIEMKSIRTAQGANELSEENFLEALECAKNYIKNATQTYHQQFAPYKKSPFAFESANDELDEQLLNIIQTHYHTPITEAIKHMAKSERHTQLKALIKQVVRECEIEDEKKVQEHIMAYKRKLVREMILQSHIRADGRGLKDVRPISIQTNILPFAHGSVLFTRGQTQALVSATIGGDNDAQNYEMLGSKNALKKRFLFHYNFPSFSVGEASMIGSVGRRELGHGNLAKRALHSSVQEQDKTIRLVSEILESNGSSSMASVCGGSLALCACGIKVESLIAGVAMGLVTQDEQCAILTDISGLEDHDGDMDFKVAGGYKGISAMQMDIKLGGITQEILCQALFQAKEAREQILAIMEEARAKIVLNDVILPKSESFMIPPHKIVEVIGAGGRVIKDIIERFEVSIDLARESGMVSVSASNVENLQKAKTFILQLVSSAGTKKEYEKVDWESYAVGERFVGKIKKIVDFGIFVELPRGGDGLIHISKITKDKTQQLSEIFHNVSELECEILSQNKNKVELGLVE.

2 residues coordinate Mg(2+): Asp491 and Asp497. The KH domain maps to 557-617; the sequence is PKSESFMIPP…ENLQKAKTFI (61 aa). The 69-residue stretch at 641-709 folds into the S1 motif domain; that stretch reads GERFVGKIKK…KNKVELGLVE (69 aa).

The protein belongs to the polyribonucleotide nucleotidyltransferase family. Requires Mg(2+) as cofactor.

Its subcellular location is the cytoplasm. The enzyme catalyses RNA(n+1) + phosphate = RNA(n) + a ribonucleoside 5'-diphosphate. Functionally, involved in mRNA degradation. Catalyzes the phosphorolysis of single-stranded polyribonucleotides processively in the 3'- to 5'-direction. This chain is Polyribonucleotide nucleotidyltransferase, found in Helicobacter hepaticus (strain ATCC 51449 / 3B1).